A 429-amino-acid polypeptide reads, in one-letter code: Metacaspase-1A (429 aa).

The tract at residues 1–68 is disordered; sequence MQHHHQGSYG…PQHNGGQMYG (68 aa). Positions 8-19 are enriched in gly residues; it reads SYGGGGGGGGYP. Residues 20-45 are compositionally biased toward low complexity; the sequence is GQAYREQNPYGYGQQSPQQGYGAPQQ. A compositionally biased stretch (polar residues) spans 46-62; that stretch reads HNGYNQPPSGYGQPQHN. Residues histidine 220 and cysteine 276 contribute to the active site.

The protein belongs to the peptidase C14B family.

Its function is as follows. Involved in cell death (apoptosis). In Aspergillus clavatus (strain ATCC 1007 / CBS 513.65 / DSM 816 / NCTC 3887 / NRRL 1 / QM 1276 / 107), this protein is Metacaspase-1A (casA).